The following is a 208-amino-acid chain: Putative dioxygenase RBE_0329 (208 aa).

It belongs to the intradiol ring-cleavage dioxygenase family.

The polypeptide is Putative dioxygenase RBE_0329 (Rickettsia bellii (strain RML369-C)).